The primary structure comprises 129 residues: Small ribosomal subunit protein uS12 (129 aa).

Residue Asp-89 is modified to 3-methylthioaspartic acid.

The protein belongs to the universal ribosomal protein uS12 family. Part of the 30S ribosomal subunit. Contacts proteins S8 and S17. May interact with IF1 in the 30S initiation complex.

Its function is as follows. With S4 and S5 plays an important role in translational accuracy. In terms of biological role, interacts with and stabilizes bases of the 16S rRNA that are involved in tRNA selection in the A site and with the mRNA backbone. Located at the interface of the 30S and 50S subunits, it traverses the body of the 30S subunit contacting proteins on the other side and probably holding the rRNA structure together. The combined cluster of proteins S8, S12 and S17 appears to hold together the shoulder and platform of the 30S subunit. The protein is Small ribosomal subunit protein uS12 of Helicobacter hepaticus (strain ATCC 51449 / 3B1).